Reading from the N-terminus, the 314-residue chain is Aryldialkylphosphatase (314 aa).

Fe cation is bound by residues H22, H24, and K137. Residues K137, H170, and H199 each coordinate Co(2+). N6-carboxylysine is present on K137. Fe cation is bound at residue D256.

It belongs to the metallo-dependent hydrolases superfamily. Phosphotriesterase family. Homodimer. It depends on Co(2+) as a cofactor. The cofactor is Fe cation.

It catalyses the reaction An aryl dialkyl phosphate + H2O = dialkyl phosphate + an aryl alcohol.. Inactivated by EDTA and o-phenanthroline. In terms of biological role, has a low paraoxonase activity. Also active, but with a lower activity, against other organo-phosphorus insecticides such as Dursban, Coumaphos, pNP-butanoate or parathion. This chain is Aryldialkylphosphatase (php), found in Saccharolobus solfataricus (strain ATCC 35092 / DSM 1617 / JCM 11322 / P2) (Sulfolobus solfataricus).